Consider the following 124-residue polypeptide: Fluoride-specific ion channel FluC (124 aa).

The next 4 helical transmembrane spans lie at 5–25 (FLQVALGGALGSAARYGVNIL), 35–55 (LGTLSVNIAGCLAMGLLAALL), 63–83 (LAPFLLTGMLGGFTTFSAFAL), and 98–118 (LGYVLGSVVLSLAAVIAGLTV). Gly73 and Thr76 together coordinate Na(+).

The protein belongs to the fluoride channel Fluc/FEX (TC 1.A.43) family.

The protein localises to the cell inner membrane. It catalyses the reaction fluoride(in) = fluoride(out). With respect to regulation, na(+) is not transported, but it plays an essential structural role and its presence is essential for fluoride channel function. Functionally, fluoride-specific ion channel. Important for reducing fluoride concentration in the cell, thus reducing its toxicity. The sequence is that of Fluoride-specific ion channel FluC from Paracoccus denitrificans (strain Pd 1222).